Consider the following 221-residue polypeptide: Fructokinase (221 aa).

The protein belongs to the carbohydrate kinase PfkB family.

It catalyses the reaction D-fructose + ATP = D-fructose 6-phosphate + ADP + H(+). This Salmonella thompson protein is Fructokinase (scrK).